The following is a 201-amino-acid chain: Histidinol dehydrogenase (201 aa).

This sequence belongs to the histidinol dehydrogenase family. Homodimer. It depends on Zn(2+) as a cofactor.

It catalyses the reaction L-histidinol + 2 NAD(+) + H2O = L-histidine + 2 NADH + 3 H(+). It participates in amino-acid biosynthesis; L-histidine biosynthesis; L-histidine from 5-phospho-alpha-D-ribose 1-diphosphate: step 9/9. In terms of biological role, catalyzes the sequential NAD-dependent oxidations of L-histidinol to L-histidinaldehyde and then to L-histidine. In Buchnera aphidicola subsp. Melaphis rhois, this protein is Histidinol dehydrogenase (hisD).